Here is a 558-residue protein sequence, read N- to C-terminus: Atlastin-1 (558 aa).

A disordered region spans residues Met-1 to Pro-28. An N-terminal hypervariable region (HVR) region spans residues Met-1–Pro-34. Topologically, residues Met-1–Ala-449 are cytoplasmic. Ser-10, Ser-22, and Ser-23 each carry phosphoserine. Residues Asp-64–Arg-309 enclose the GB1/RHD3-type G domain. Residues Arg-77, Lys-78, Gly-79, Lys-80, Ser-81, Phe-82, Gln-148, Arg-217, Asp-218, Val-276, and Asn-279 each contribute to the GDP site. GTP-binding residues include Arg-77, Lys-78, Gly-79, Lys-80, Ser-81, and Phe-82. Ser-81 is a binding site for Mg(2+). Positions 217, 218, and 276 each coordinate GTP. Residues Met-347 to Ser-438 are 3HB (three-helix bundle) domain. Lys-395 bears the N6-acetyllysine mark. A coiled-coil region spans residues Glu-412–Lys-439. The interval Lys-439–Thr-447 is linker. A helical transmembrane segment spans residues Thr-450–Leu-470. Asp-471 is a topological domain (lumenal). A helical membrane pass occupies residues Ile-472 to Ala-492. The Cytoplasmic segment spans residues Tyr-493 to Ile-558. The segment at Asn-521–Ile-558 is autoinhibitory domain.

Belongs to the TRAFAC class dynamin-like GTPase superfamily. GB1/RHD3 GTPase family. GB1 subfamily. Monomeric and homodimeric. The homodimer, transiently formed by two molecules on opposing membranes, is the active form mediating ER membrane fusion. Interacts with REEP1, REEP5, RTN3 and RTN4 (via the transmembrane region); these proteins are involved in endoplasmic reticulum tubular network organization. Interacts with ZFYVE27; both proteins are involved in endoplasmic reticulum tubular network organization. Interacts with ARL6IP1; both proteins are involved in endoplasmic reticulum tubular network organization. Interacts with SPAST; the interaction is direct, could recruit SPAST to Golgi membranes. Interacts (via N-terminal region) with MAP4K4 (via CNH regulatory domain). May interact with TMED2. Interacts with CPT1C. Post-translationally, phosphorylated. Phosphorylation, by different kinases, of the N-terminal hypervariable region (HVR) regulates the ATL1-mediated membrane tethering step.

It is found in the endoplasmic reticulum membrane. Its subcellular location is the golgi apparatus membrane. It localises to the cell projection. The protein localises to the axon. It catalyses the reaction GTP + H2O = GDP + phosphate + H(+). Functionally, atlastin-1 (ATL1) is a membrane-anchored GTPase that mediates the GTP-dependent fusion of endoplasmic reticulum (ER) membranes, maintaining the continuous ER network. It facilitates the formation of three-way junctions where ER tubules intersect. Two atlastin-1 on neighboring ER tubules bind GTP and form loose homodimers through the GB1/RHD3-type G domains and 3HB regions. Upon GTP hydrolysis, the 3HB regions tighten, pulling the membranes together to drive their fusion. After fusion, the homodimer disassembles upon release of inorganic phosphate (Pi). Subsequently, GDP dissociates, resetting the monomers to a conformation ready for a new fusion cycle. May also regulate more or less directly Golgi biogenesis. Indirectly regulates axonal development. The polypeptide is Atlastin-1 (Mus musculus (Mouse)).